Consider the following 488-residue polypeptide: Protein kinase C and casein kinase substrate in neurons 2 protein (488 aa).

An F-BAR domain is found at 11–282 (VEVSSDSFWE…SIKAADAVED (272 aa)). The stretch at 25 to 274 (KRTVKRIDDG…GIYRELEQSI (250 aa)) forms a coiled coil. Position 53 is an N6-acetyllysine (K53). Basic and acidic residues predominate over residues 163-176 (CKEEKLAVSREANS). Positions 163 to 183 (CKEEKLAVSREANSKADPSLN) are disordered. S273 bears the Phosphoserine mark. S315 carries the phosphoserine; by PKC modification. Positions 316–429 (RREKKKAADG…PFDEDTTSGT (114 aa)) are disordered. A compositionally biased stretch (polar residues) spans 329–364 (TGINQTGDQSGQNKPSSNLSVPSNPAQSTQLQSSYN). The NPF1 signature appears at 364–366 (NPF). The residue at position 375 (S375) is a Phosphoserine; by IKKB. Residues 386–396 (NVSSYEKTQNY) show a composition bias toward polar residues. S401 is subject to Phosphoserine. Over residues 406 to 418 (NNPFSSTDANGDS) the composition is skewed to polar residues. Residues 407–409 (NPF) carry the NPF2 motif. The NPF3 signature appears at 419-421 (NPF). An SH3 domain is found at 428 to 488 (GTEVRVRALY…YPANYVEAIQ (61 aa)). S448 bears the Phosphoserine mark.

The protein belongs to the PACSIN family. As to quaternary structure, homodimer. May form heterooligomers with other PACSINs. Interacts (via NPF motifs) with EHD1 (via EH domain). Interacts with EHD3. Interacts (via the SH3 domain) with MICALL1. Interacts with RAC1. Interacts (via SH3 domain) with DNM1, SYN1, SYNJ1 and WASL. Interacts with CAV1. Interacts with TRPV4. Forms a complex with EHD4 and MICALL1; the complex controls CDH5 trafficking and coordinates angiogenesis. Phosphorylated by casein kinase 2 (CK2) and protein kinase C (PKC). Phosphorylation by PKC probably decreases the membrane binding and tubulation capacities of PACSIN2, thereby modulating the lifetime of caveolae. In terms of tissue distribution, widely expressed (at protein level). Isoforms 1/3 are predominantly expressed in heart and in PC-12 cells, a pheochromocytoma cell line (at protein level). Isoforms 2/4 are widely expressed with highest levels in muscle, testis and brain (at protein level).

The protein localises to the cytoplasm. It is found in the cytoskeleton. The protein resides in the cytoplasmic vesicle membrane. Its subcellular location is the cell projection. It localises to the ruffle membrane. The protein localises to the early endosome. It is found in the recycling endosome membrane. The protein resides in the cell membrane. Its subcellular location is the membrane. It localises to the caveola. The protein localises to the cell junction. It is found in the adherens junction. Functionally, regulates the morphogenesis and endocytosis of caveolae. Lipid-binding protein that is able to promote the tubulation of the phosphatidic acid-containing membranes it preferentially binds. Plays a role in intracellular vesicle-mediated transport. Involved in the endocytosis of cell-surface receptors like the EGF receptor, contributing to its internalization in the absence of EGF stimulus. Facilitates endothelial front-rear polarity during migration by recruiting EHD4 and MICALL1 to asymmetric adherens junctions between leader and follower cells. This Rattus norvegicus (Rat) protein is Protein kinase C and casein kinase substrate in neurons 2 protein (Pacsin2).